The following is an 86-amino-acid chain: NADH-ubiquinone oxidoreductase chain 4L (86 aa).

A run of 2 helical transmembrane segments spans residues 22-42 (LLVTLLSFEFLILLLFSLLVY) and 52-72 (FIFLSVTVCEGALGLSVLVSL).

This sequence belongs to the complex I subunit 4L family.

The protein resides in the mitochondrion membrane. It carries out the reaction a ubiquinone + NADH + 5 H(+)(in) = a ubiquinol + NAD(+) + 4 H(+)(out). In terms of biological role, core subunit of the mitochondrial membrane respiratory chain NADH dehydrogenase (Complex I) that is believed to belong to the minimal assembly required for catalysis. Complex I functions in the transfer of electrons from NADH to the respiratory chain. The immediate electron acceptor for the enzyme is believed to be ubiquinone. The chain is NADH-ubiquinone oxidoreductase chain 4L (ND4L) from Artemia salina (Brine shrimp).